We begin with the raw amino-acid sequence, 409 residues long: Arginine deiminase (409 aa).

Residue cysteine 399 is the Amidino-cysteine intermediate of the active site.

It belongs to the arginine deiminase family.

It is found in the cytoplasm. The catalysed reaction is L-arginine + H2O = L-citrulline + NH4(+). Its pathway is amino-acid degradation; L-arginine degradation via ADI pathway; carbamoyl phosphate from L-arginine: step 1/2. The chain is Arginine deiminase from Borrelia duttonii (strain Ly).